We begin with the raw amino-acid sequence, 464 residues long: NADH dehydrogenase [ubiquinone] flavoprotein 1, mitochondrial (464 aa).

The N-terminal 20 residues, 1 to 20, are a transit peptide targeting the mitochondrion; the sequence is MLATRRLLGWSLPARVSVRF. Lys-81 is subject to N6-acetyllysine; alternate. Lys-81 carries the post-translational modification N6-succinyllysine; alternate. 87 to 96 contributes to the NADH binding site; it reads GRGGAGFPTG. Lys-104 carries the post-translational modification N6-acetyllysine. 199-247 contributes to the FMN binding site; it reads RGAGAYICGEETALIESIEGKQGKPRLKPPFPADVGVFGCPTTVANVET. Arg-257 is subject to Omega-N-methylarginine. Lys-375 carries the post-translational modification N6-acetyllysine. Cys-379, Cys-382, Cys-385, and Cys-425 together coordinate [4Fe-4S] cluster.

It belongs to the complex I 51 kDa subunit family. As to quaternary structure, core subunit of respiratory chain NADH dehydrogenase (Complex I) which is composed of 45 different subunits. This is a component of the flavoprotein-sulfur (FP) fragment of the enzyme. Interacts with RAB5IF. FMN serves as cofactor. The cofactor is [4Fe-4S] cluster.

It is found in the mitochondrion inner membrane. It carries out the reaction a ubiquinone + NADH + 5 H(+)(in) = a ubiquinol + NAD(+) + 4 H(+)(out). Functionally, core subunit of the mitochondrial membrane respiratory chain NADH dehydrogenase (Complex I) which catalyzes electron transfer from NADH through the respiratory chain, using ubiquinone as an electron acceptor. Part of the peripheral arm of the enzyme, where the electrons from NADH are accepted by flavin mononucleotide (FMN) and then passed along a chain of iron-sulfur clusters by electron tunnelling to the final acceptor ubiquinone. Contains FMN, which is the initial electron acceptor as well as one iron-sulfur cluster. This Homo sapiens (Human) protein is NADH dehydrogenase [ubiquinone] flavoprotein 1, mitochondrial.